Here is a 385-residue protein sequence, read N- to C-terminus: Nod factor hydrolase protein 1 (385 aa).

The N-terminal stretch at 1–21 (MANFLKLKQFLTLVLILLALA) is a signal peptide. Residues 36-385 (RVKGIYWIEN…TASKAWRPES (350 aa)) form the GH18 domain. N-linked (GlcNAc...) asparagine glycosylation is found at asparagine 115 and asparagine 134. The active-site Proton donor is the glutamate 153. Asparagine 233 and asparagine 247 each carry an N-linked (GlcNAc...) asparagine glycan.

This sequence belongs to the glycosyl hydrolase 18 family. Chitinase class V subfamily.

In terms of biological role, symbiotic enzyme that hydrolytically inactivates Nod factors (NFs) with a C16:2 acyl chain produced by the microsymbiont Sinorhizobium meliloti. NFs are lipo-chitooligosaccharide signaling molecules produced by nitrogen-fixing rhizobia to initiate nodulation (symbiosis) on the roots of legumes. Controls NF hydrolysis at the stage of root hair infection. Involved in the regulation of growth and branching of mature nodules. Modulates NF levels and signaling to complete transition of infected nodules to functional nitrogen-fixing organs. Lacks chitinase activity in vitro toward glycol chitin, carboxymethyl-chitin, colloidal chitin, and the chitin oligosaccharides (N-acetylglucosamine) (GlcNAc)6 and (GlcNAc)5. The polypeptide is Nod factor hydrolase protein 1 (Medicago truncatula (Barrel medic)).